The chain runs to 276 residues: MSWLQVIVLSIVQGLTEFLPVSSSGHLAITSQVFFDDDAGASFTAVTQLGTEFAVLIYFAKDIGRIIKSWFLGLRAPEHRDADYRLGWFVIVGTIPIGVFGLLFKDEIRTGARNLWLVATALIVFSVVIAAAEYYGRQVRQVEQLTWRDSVIVGLAQCLALMPGVSRSGATISAGLFLGLKREVAARFGFLLAIPAVLASGLFSLPDAFHPVGEGMSASGPQLIVATVIAFVVGFAAIAWFLKFLVSHSMYWFVGYRVVLGVVVLALLGTGVLAAQ.

8 helical membrane passes run 1–21 (MSWLQVIVLSIVQGLTEFLPV), 39–59 (AGASFTAVTQLGTEFAVLIYF), 84–104 (YRLGWFVIVGTIPIGVFGLLF), 115–135 (LWLVATALIVFSVVIAAAEYY), 159–179 (LALMPGVSRSGATISAGLFLG), 188–208 (FGFLLAIPAVLASGLFSLPDA), 222–242 (QLIVATVIAFVVGFAAIAWFL), and 253–273 (FVGYRVVLGVVVLALLGTGVL).

The protein belongs to the UppP family.

The protein resides in the cell membrane. It catalyses the reaction di-trans,octa-cis-undecaprenyl diphosphate + H2O = di-trans,octa-cis-undecaprenyl phosphate + phosphate + H(+). Its function is as follows. Catalyzes the dephosphorylation of undecaprenyl diphosphate (UPP). Confers resistance to bacitracin. The sequence is that of Undecaprenyl-diphosphatase from Mycolicibacterium smegmatis (strain ATCC 700084 / mc(2)155) (Mycobacterium smegmatis).